The sequence spans 288 residues: Protoheme IX farnesyltransferase 2 (288 aa).

The next 9 membrane-spanning stretches (helical) occupy residues 8–28 (ITKPGIIFGNLISVAAGFFLA), 36–56 (LMLFLTTLAGVGLVIASGCVV), 85–105 (VAFVYALAMLLLGTALLFQLV), 108–128 (LSAVVVLLGYVYYVFFYTMWY), 131–151 (NSVYGTLVGSISGAVPPLVGY), 152–172 (LAVTNFISLEAILLFTMFCLW), 211–231 (AYVVAFGAVSLGLFLLGEAGY), 233–252 (YLAVAAVVCLMWTKVTFRSI), and 267–287 (VSLLVVMGISGVLGVELIPLA).

It belongs to the UbiA prenyltransferase family. Protoheme IX farnesyltransferase subfamily.

The protein localises to the cell inner membrane. It catalyses the reaction heme b + (2E,6E)-farnesyl diphosphate + H2O = Fe(II)-heme o + diphosphate. It participates in porphyrin-containing compound metabolism; heme O biosynthesis; heme O from protoheme: step 1/1. Converts heme B (protoheme IX) to heme O by substitution of the vinyl group on carbon 2 of heme B porphyrin ring with a hydroxyethyl farnesyl side group. The polypeptide is Protoheme IX farnesyltransferase 2 (Vibrio parahaemolyticus serotype O3:K6 (strain RIMD 2210633)).